Here is a 354-residue protein sequence, read N- to C-terminus: Guanine nucleotide-binding protein G(t) subunit alpha-3 (354 aa).

The segment at 1 to 27 (MGSGISSESKESAKRSKELEKKLQEDA) is disordered. G2 carries the N-myristoyl glycine lipid modification. The span at 8-27 (ESKESAKRSKELEKKLQEDA) shows a compositional bias: basic and acidic residues. The G-alpha domain maps to 32 to 354 (RTVKLLLLGA…KENLKDCGLF (323 aa)). A G1 motif region spans residues 35–48 (KLLLLGAGESGKST). GTP contacts are provided by residues 40–47 (GAGESGKS), 175–181 (LHSRVKT), 200–204 (DVGGQ), 269–272 (NKKD), and A326. Positions 47 and 181 each coordinate Mg(2+). The tract at residues 173–181 (DVLHSRVKT) is G2 motif. The interval 196–205 (FRMFDVGGQR) is G3 motif. The tract at residues 265 to 272 (VLFLNKKD) is G4 motif. A G5 motif region spans residues 324–329 (TCATDT).

This sequence belongs to the G-alpha family. G(i/o/t/z) subfamily. G proteins are composed of 3 units; alpha, beta and gamma, respectively GNAT3, GNB1 and GNG13 for Gustducin heterotrimer for bitter taste transduction. The alpha chain contains the guanine nucleotide binding site. Component of the TAS2R14-GNAT3 complex, consisting of TAS2R14, GNAT3, GNB1 and GNG2; within the complex interacts with TAS2R14; this complex plays a role in the perception of bitterness. Gustducin heterotrimer may also be composed of GNAT3, GNB3 and GNG13. Post-translationally, potential N-myristoylation may anchor alpha-subunit to the inner surface of plasma membrane. As to expression, expressed in taste buds (sensory organs of clustered epithelial cells) of the circumvallate, foliate and fungiform papillae of the tongue, as well as in nasoincisor, palatal and epiglottal taste buds at protein level. Expressed in enteroendocrine of the gut, in the lumenal pole of a subset of brush cells lining the stomach and the intestine at protein level. Detected in solitary cells throughout the respiratory track. Expressed also in spermatozoa.

The protein resides in the cytoplasm. Guanine nucleotide-binding protein (G protein) alpha subunit playing a prominent role in bitter and sweet taste transduction as well as in umami (monosodium glutamate, monopotassium glutamate, and inosine monophosphate) taste transduction. Transduction by this alpha subunit involves coupling of specific cell-surface receptors with a cGMP-phosphodiesterase; Activation of phosphodiesterase lowers intracellular levels of cAMP and cGMP which may open a cyclic nucleotide-suppressible cation channel leading to influx of calcium, ultimately leading to release of neurotransmitter. Indeed, denatonium and strychnine induce transient reduction in cAMP and cGMP in taste tissue, whereas this decrease is inhibited by GNAT3 antibody. Gustducin heterotrimer transduces response to bitter and sweet compounds via regulation of phosphodiesterase for alpha subunit, as well as via activation of phospholipase C for beta and gamma subunits, with ultimate increase inositol trisphosphate and increase of intracellular Calcium. GNAT3 can functionally couple to taste receptors to transmit intracellular signal: receptor heterodimer TAS1R2/TAS1R3 senses sweetness and TAS1R1/TAS1R3 transduces umami taste, whereas the T2R family GPCRs act as bitter sensors. Also functions as lumenal sugar sensors in the gut to control the expression of the Na+-glucose transporter SGLT1 in response to dietaty sugar, as well as the secretion of Glucagon-like peptide-1, GLP-1 and glucose-dependent insulinotropic polypeptide, GIP. Thus, may modulate the gut capacity to absorb sugars, with implications for the prevention and treatment of malabsorption syndromes and diet-related disorders including diabetes and obesity. This chain is Guanine nucleotide-binding protein G(t) subunit alpha-3 (Gnat3), found in Rattus norvegicus (Rat).